We begin with the raw amino-acid sequence, 120 residues long: Internal scaffolding protein B (120 aa).

Residues 1–23 (MEQLTKNQAVATSQEAVQNQNEP) show a composition bias toward polar residues. A disordered region spans residues 1 to 64 (MEQLTKNQAV…PDIEAERKKR (64 aa)). Basic and acidic residues-rich tracts occupy residues 24–36 (QLRD…DKSV) and 48–64 (LRRD…RKKR).

It belongs to the microviridae B protein family. Component of the procapsid complex composed of 60 copies of the internally located B, 240 copies of the external scaffolding protein D, 60 copies of each of the viral structural proteins F and G proteins, and 12 copies of H. Post-translationally, the proteolytic cleavage of the internal scaffolding protein B releases the scaffold protein in order to continue virion assembly.

Its subcellular location is the host cytoplasm. Participates in the assembly of the viral procapsid in the cytoplasm. Forms first a 12S pre-assembly complex with protein H, and F and G pentamers, then twelve 12S complexes are joined by the D protein to form the procapsid. Internal scaffold protein B is released from the procapsid upon genome packaging. Autoproteolytic activity cleaves protein B and probably facilitates its removal through the pores of the procapsid. The sequence is that of Internal scaffolding protein B (B) from Enterobacteria phage phiX174 (Isolate Sanger).